The sequence spans 1109 residues: Zinc finger E-box-binding homeobox 1 (1109 aa).

2 disordered regions span residues 1–106 and 123–143; these read MADG…DPNV and PEED…NGTP. Positions 15–30 are enriched in low complexity; the sequence is PRRNNVTNYNTVVEAN. Phosphoserine occurs at positions 31 and 33. Residues 87 to 98 are compositionally biased toward acidic residues; it reads VKDDECDSDAEN. The C2H2-type 1 zinc-finger motif lies at 150-173; it reads LTCPYCDRGYKRFTSLKEHIKYRH. Glycyl lysine isopeptide (Lys-Gly) (interchain with G-Cter in SUMO2) cross-links involve residues lysine 166 and lysine 175. 2 C2H2-type zinc fingers span residues 180–202 and 220–242; these read FSCS…MTSH and FKCT…LRIH. Residues 248–272 form a C2H2-type 4; atypical zinc finger; the sequence is YECPNCKKRFSHSGSYSSHISSKKC. Positions 278 to 307 are disordered; sequence VNGRPRSGLKTSQCSSPSLSTSPGSPTRPQ. Residue lysine 287 forms a Glycyl lysine isopeptide (Lys-Gly) (interchain with G-Cter in SUMO2) linkage. Residues 288-304 are compositionally biased toward low complexity; it reads TSQCSSPSLSTSPGSPT. 2 positions are modified to phosphoserine: serine 293 and serine 302. Residues lysine 311 and lysine 315 each participate in a glycyl lysine isopeptide (Lys-Gly) (interchain with G-Cter in SUMO2) cross-link. Lysine 327 is covalently cross-linked (Glycyl lysine isopeptide (Lys-Gly) (interchain with G-Cter in SUMO); alternate). Lysine 327 is covalently cross-linked (Glycyl lysine isopeptide (Lys-Gly) (interchain with G-Cter in SUMO2); alternate). Glycyl lysine isopeptide (Lys-Gly) (interchain with G-Cter in SUMO2) cross-links involve residues lysine 419, lysine 473, lysine 484, lysine 495, and lysine 528. 3 disordered regions span residues 468-501, 525-566, and 614-711; these read VPQN…KDKS, PELK…SQPP, and QIPG…PQVE. Basic and acidic residues predominate over residues 483-501; the sequence is CKSEKSPEDLTVKSEKDKS. Positions 559–618 form a DNA-binding region, homeobox; atypical; it reads DLSPSQPPLKNLLSLLKAYYALNAQPSTEELTKIADSVNLPLDVVKKWFEKMQAGQIPGQ. A compositionally biased stretch (polar residues) spans 654–665; it reads RGQSPLKMTSSP. Serine 657, serine 664, serine 671, and serine 678 each carry phosphoserine. Residues 673–703 show a composition bias toward polar residues; it reads INGSRSCTSSPSPLNLSSARNPQGYSCVSEG. The residue at position 680 (threonine 680) is a Phosphothreonine. Serine 682 is modified (phosphoserine). Lysine 752 participates in a covalent cross-link: Glycyl lysine isopeptide (Lys-Gly) (interchain with G-Cter in SUMO); alternate. A Glycyl lysine isopeptide (Lys-Gly) (interchain with G-Cter in SUMO2); alternate cross-link involves residue lysine 752. The interval 834–873 is disordered; it reads PPVKVIQPNGNQDERQDTSSEGVSVEDQNDSDCTPPKKKT. 2 C2H2-type zinc fingers span residues 881–903 and 909–931; these read YACD…KYEH and HECG…MRLH. The C2H2-type 7; atypical zinc-finger motif lies at 937–958; sequence YQCDKCGKRFSHSGSYSQHMNH. Residues 968-1109 are disordered; it reads EDRDAMEQED…RLSEEKTNEA (142 aa). A compositionally biased stretch (acidic residues) spans 1012–1066; it reads EEDEDSEKEEEEEDKEMEELQEDKECENPQEEEEEEEEEEEEEEEEEEEEAEEAE. Residues 1071-1087 show a composition bias toward low complexity; that stretch reads AAKTGGAVEEEAAQQAG. The segment covering 1097–1109 has biased composition (basic and acidic residues); that stretch reads ESKRLSEEKTNEA.

It belongs to the delta-EF1/ZFH-1 C2H2-type zinc-finger family. As to quaternary structure, interacts (via N-terminus) with SMARCA4/BRG1. Post-translationally, ubiquitinated, leading to degradation in a proteasome-dependent manner. Deubiquitinated by USP51, leading to stabilization.

The protein localises to the nucleus. In terms of biological role, acts as a transcriptional repressor. Binds to E-box sequences in the immunoglobulin heavy chain enhancer as well as in the regulatory regions of many other tissue-specific genes. Represses E-cadherin promoter and induces an epithelial-mesenchymal transition (EMT) by recruiting SMARCA4/BRG1. Represses BCL6 transcription in the presence of the corepressor CTBP1. Positively regulates neuronal differentiation. Represses RCOR1 transcription activation during neurogenesis. Represses transcription by binding to the E box (5'-CANNTG-3'). In the absence of TGFB1, acts as a repressor of COL1A2 transcription via binding to the E-box in the upstream enhancer region. This chain is Zinc finger E-box-binding homeobox 1, found in Rattus norvegicus (Rat).